The chain runs to 631 residues: Probable G-protein coupled receptor 153 (631 aa).

Residues 1–11 (MSDERRLPSSA) are Extracellular-facing. The helical transmembrane segment at 12–32 (VGWLACGGLSLLANAWGILSV) threads the bilayer. The Cytoplasmic portion of the chain corresponds to 33–41 (GAKQKKWKP). The helical transmembrane segment at 42–62 (LEFLLCTLAATHMLNVAVPIA) threads the bilayer. The Extracellular portion of the chain corresponds to 63–84 (TYAVVQLRRQRPDYEWNEGLCK). Residues 85–105 (VFVSTFYTLTLATCFSVTSIS) form a helical membrane-spanning segment. Over 106 to 126 (YHRMWMVRWPVNYRLSNAKKQ) the chain is Cytoplasmic. A helical membrane pass occupies residues 127–147 (AVHTVMGIWMVSFILSALPAV). The Extracellular segment spans residues 148-162 (GWHDTSERFYTHGCR). The chain crosses the membrane as a helical span at residues 163 to 183 (FIVAEIGLGFGVCFLLLVGGS). Over 184 to 243 (VAMGMVCTAIALFQTLATQVGHRADRRTFTVPTIVVEDAQGKRRSSIDGSEPARTSLQIT) the chain is Cytoplasmic. Residues 244-264 (GLVATIVVIYDCLMGFPVLVV) form a helical membrane-spanning segment. Over 265-276 (SFSSLRADASAP) the chain is Extracellular. The helical transmembrane segment at 277 to 297 (WMALCVLWCSVTQALLLPLFL) threads the bilayer. At 298–631 (WTCDRYRADL…LHSDSLGSAS (334 aa)) the chain is on the cytoplasmic side. 3 disordered regions span residues 486 to 518 (LQPS…RSAS), 546 to 590 (QPFP…SLSA), and 603 to 631 (CGSI…GSAS). Residues 605-617 (SISSFLSSPSESS) are compositionally biased toward low complexity.

The protein belongs to the G-protein coupled receptor 1 family.

It localises to the cell membrane. In terms of biological role, orphan receptor. The polypeptide is Probable G-protein coupled receptor 153 (Gpr153) (Mus musculus (Mouse)).